The following is a 431-amino-acid chain: Extensin-3 (431 aa).

Residues 1–27 (MGSPMASLVATLLVLTISLTFVSQSTA) form the signal peptide. A run of 3 repeats spans residues 33–41 (SPPPPVKHY), 49–55 (SPPPVYH), and 56–63 (SPPPPKKH). Residues 33–384 (SPPPPVKHYT…KSPPPPVKHY (352 aa)) form a 13 X 9 AA repeats of S-P-P-P-P-V-K-H-Y region. Residues 42–408 (TPPVKHYSPP…KYVYKSPPPP (367 aa)) are disordered. Residues 49–59 (SPPPVYHSPPP) show a composition bias toward pro residues. The interval 49–391 (SPPPVYHSPP…KHYSPPPVYH (343 aa)) is 13 X 7 AA repeats of S-P-P-P-V-Y-H. Residues 56–371 (SPPPPKKHYE…YHSPPPPKKH (316 aa)) are 12 X 8 AA repeats of S-P-P-P-P-K-K-H. The segment at 64–67 (YEYK) is isodityrosine cross-linking. Repeat copies occupy residues 68–76 (SPPPPVKHY), 77–83 (SPPPVYH), and 84–91 (SPPPPKKH). Positions 68-87 (SPPPPVKHYSPPPVYHSPPP) are enriched in pro residues. Residues 92–95 (YVYK) are isodityrosine cross-linking. 3 repeat units span residues 96 to 104 (SPPPPVKHY), 105 to 111 (SPPPVYH), and 112 to 119 (SPPPPKKH). Residues 96–115 (SPPPPVKHYSPPPVYHSPPP) are compositionally biased toward pro residues. An isodityrosine cross-linking region spans residues 120–123 (YVYK). Tandem repeats lie at residues 124–132 (SPPPPVKHY), 133–139 (SPPPVYH), and 140–147 (SPPPPKKH). Residues 124-143 (SPPPPVKHYSPPPVYHSPPP) are compositionally biased toward pro residues. The isodityrosine cross-linking stretch occupies residues 148 to 151 (YVYK). 3 repeat units span residues 152–160 (SPPPPVKHY), 161–167 (SPPPVYH), and 168–175 (SPPPPKKH). Positions 152–171 (SPPPPVKHYSPPPVYHSPPP) are enriched in pro residues. Positions 176–179 (YVYK) are isodityrosine cross-linking. 3 tandem repeats follow at residues 180-188 (SPPPPVKHY), 189-195 (SPPPVYH), and 196-203 (SPPPPKKH). Over residues 180-199 (SPPPPVKHYSPPPVYHSPPP) the composition is skewed to pro residues. The segment at 204-207 (YVYK) is isodityrosine cross-linking. 3 consecutive repeat copies span residues 208–216 (SPPPPVKHY), 217–223 (SPPPVYH), and 224–231 (SPPPPKKH). Residues 208–227 (SPPPPVKHYSPPPVYHSPPP) show a composition bias toward pro residues. An isodityrosine cross-linking region spans residues 232-235 (YVYK). Repeat copies occupy residues 236–244 (SPPPPVKHY), 245–251 (SPPPVYH), and 252–259 (SPPPPKKH). Residues 236–255 (SPPPPVKHYSPPPVYHSPPP) are compositionally biased toward pro residues. Positions 260-263 (YVYK) are isodityrosine cross-linking. 3 repeat units span residues 264–272 (SPPPPVKHY), 273–279 (SPPPVYH), and 280–287 (SPPPPKKH). Over residues 264-283 (SPPPPVKHYSPPPVYHSPPP) the composition is skewed to pro residues. Residues 288-291 (YVYK) form an isodityrosine cross-linking region. Tandem repeats lie at residues 292–300 (SPPPPVKHY), 301–307 (SPPPVYH), and 308–315 (SPPPPKKH). Over residues 292–311 (SPPPPVKHYSPPPVYHSPPP) the composition is skewed to pro residues. Positions 316–319 (YVYK) are isodityrosine cross-linking. A run of 3 repeats spans residues 320-328 (SPPPPVKHY), 329-335 (SPPPVYH), and 336-343 (SPPPPKKH). Residues 320–339 (SPPPPVKHYSPPPVYHSPPP) are compositionally biased toward pro residues. The isodityrosine cross-linking stretch occupies residues 344–347 (YVYK). A run of 3 repeats spans residues 348 to 356 (SPPPPVKHY), 357 to 363 (SPPPVYH), and 364 to 371 (SPPPPKKH). The span at 348-367 (SPPPPVKHYSPPPVYHSPPP) shows a compositional bias: pro residues. Positions 372 to 375 (YVYK) are isodityrosine cross-linking. A run of 2 repeats spans residues 376 to 384 (SPPPPVKHY) and 385 to 391 (SPPPVYH). Residues 376-395 (SPPPPVKHYSPPPVYHSPPP) are compositionally biased toward pro residues. 2 isodityrosine cross-linking regions span residues 400–403 (YVYK) and 420–423 (YLYK).

It belongs to the extensin family. In terms of processing, the proline residues of the Ser-Pro(3) repeats are hydroxylated and then O-glycosylated (arabinosylation) by HPAT1, HPAT2 and HPAT3. Around 20% of Hyp units are in the nonglycosylated form. The Ser residues are O-galactosylated. The lack of Ser-O-galactosylation does not affect Hyp-O-arabinosylation, but both types of O-glycosylation are central for the functionality of the protein. Correct Hyp-O-arabinosylation appears to be responsible for generating a bend on the EXT3 backbone around a YVY motif, which may represent a better scenario for Tyr intramolecular cross-links (isodityrosine type). Synthetised as soluble proteins which become insolubilised in the cell wall through the intermolecular cross-linking of Tyr on adjacent monomers. Isodityrosine (IDT) stabilizes and makes rigid the part of the polypeptide where IDT functional sites are present. In terms of tissue distribution, predominantly expressed in the roots.

It is found in the secreted. The protein resides in the primary cell wall. In terms of biological role, structural component which strengthens the primary cell wall. Forms dendritic structures indicating a propensity for self-assembly through tyrosine cross-linking. Forms intermolecular cross-links exclusively by pulcherosine (three Tyr). Scaffold formation requires an unobstructed C-terminus of EXT3. Required for the correct positioning of the cell plate during cytokinesis in cells of the developing embryo. Extensins contain a characteristic repeat of the pentapeptide Ser-Pro(4). For this particular extensin, a typical repeat of Ser-Pro(3) is found. This chain is Extensin-3, found in Arabidopsis thaliana (Mouse-ear cress).